A 289-amino-acid chain; its full sequence is Beta-lactamase Toho-2 (289 aa).

An N-terminal signal peptide occupies residues 1–28 (MVTKRVQRMMSAAAACIPLLLGSPTLYA). Ser73 acts as the Acyl-ester intermediate in catalysis. 235–237 (KTG) contributes to the substrate binding site.

Belongs to the class-A beta-lactamase family.

It carries out the reaction a beta-lactam + H2O = a substituted beta-amino acid. Its activity is regulated as follows. Inhibited 16-fold better by the beta-lactamase inhibitor tazobactam than by clavulanic acid. In terms of biological role, hydrolyzes beta-lactam antibiotics such as penicillin G, carbenicillin, cephaloridine, cefoxitin, cefotaxime, ceftazidime, and aztreonam. Has especially increased relative hydrolysis rates for cephalothin, cephaloridine, cefotaxime and ceftizoxime. The protein is Beta-lactamase Toho-2 (bla) of Escherichia coli.